We begin with the raw amino-acid sequence, 379 residues long: Putative zinc metalloprotease BR1156/BS1330_I1152 (379 aa).

H33 is a binding site for Zn(2+). Residue E34 is part of the active site. Residue H37 participates in Zn(2+) binding. 4 helical membrane-spanning segments follow: residues 39–61 (LVAR…ELLG), 122–144 (VFAG…FALY), 305–327 (FDWL…LFPL), and 355–377 (IFYR…NDLF). The PDZ domain occupies 133-208 (TIAIFSVFFA…LNFTVERDGK (76 aa)).

It belongs to the peptidase M50B family. Zn(2+) is required as a cofactor.

Its subcellular location is the cell inner membrane. The chain is Putative zinc metalloprotease BR1156/BS1330_I1152 from Brucella suis biovar 1 (strain 1330).